Reading from the N-terminus, the 354-residue chain is UDP-3-O-acylglucosamine N-acyltransferase (354 aa).

The active-site Proton acceptor is His247.

This sequence belongs to the transferase hexapeptide repeat family. LpxD subfamily. In terms of assembly, homotrimer.

The enzyme catalyses a UDP-3-O-[(3R)-3-hydroxyacyl]-alpha-D-glucosamine + a (3R)-hydroxyacyl-[ACP] = a UDP-2-N,3-O-bis[(3R)-3-hydroxyacyl]-alpha-D-glucosamine + holo-[ACP] + H(+). It functions in the pathway bacterial outer membrane biogenesis; LPS lipid A biosynthesis. Catalyzes the N-acylation of UDP-3-O-acylglucosamine using 3-hydroxyacyl-ACP as the acyl donor. Is involved in the biosynthesis of lipid A, a phosphorylated glycolipid that anchors the lipopolysaccharide to the outer membrane of the cell. In Chlamydia trachomatis serovar L2b (strain UCH-1/proctitis), this protein is UDP-3-O-acylglucosamine N-acyltransferase.